Consider the following 817-residue polypeptide: TPR repeat-containing protein C19B12.01 (817 aa).

Disordered stretches follow at residues 276–298 (DQKSLAPSEELDPILSSEDPNHP) and 386–413 (GKSPEGVDKPENDEGLGSFLPKPQDGEN). 4 TPR repeats span residues 459-492 (LQMWDCVVMCHCSLNRQDLAVQVIKRELENDPYD), 521-554 (APAQRSLGKYYYKKGDLLQAMNCFNESLKINPLS), 555-588 (YPTWFTYGCAALELQKYDAAMEAFSRCLSINPED), and 625-658 (WRIWENYMLISVDVNKWSEVIRALRRIIEIKGKD).

This chain is TPR repeat-containing protein C19B12.01, found in Schizosaccharomyces pombe (strain 972 / ATCC 24843) (Fission yeast).